The chain runs to 339 residues: MSSAALVPADDILEPTLQSILDQKSLRWIFVGGKGGVGKTTTSCSLAIQLAKVRKSVLLISTDPAHNLSDAFGQKFGKEARLVDGFDNLSAMEIDPSASMQDLLAAGGEQGEDMGFGLGGMMQDLAFSIPGVDEAMSFAEVLKQVKSLSYEVIVFDTAPTGHTLRFLQFPTVLEKGLAKLSQLSNQFGPMLNSVLGARGGLPGGQNLDEVLSKMESLRETISEVNAQFKDADLTTFVCVCIAEFLSLYETERMIQELTSYQIDTHAIVVNQLLFPGKDSTCEQCKARRKMQKKYLDEIAELYEDFNVVRMPLLVEEVRGKEKLERFSDMLVHPYQPPQE.

34–41 (KGGVGKTT) contributes to the ATP binding site. Asp63 is an active-site residue. 2 residues coordinate ATP: Glu243 and Asn270. Zn(2+) is bound by residues Cys281 and Cys284.

It belongs to the arsA ATPase family. Homodimer.

Its subcellular location is the cytoplasm. It is found in the endoplasmic reticulum. ATPase required for the post-translational delivery of tail-anchored (TA) proteins to the endoplasmic reticulum. Recognizes and selectively binds the transmembrane domain of TA proteins in the cytosol. This complex then targets to the endoplasmic reticulum by membrane-bound receptors, where the tail-anchored protein is released for insertion. This process is regulated by ATP binding and hydrolysis. ATP binding drives the homodimer towards the closed dimer state, facilitating recognition of newly synthesized TA membrane proteins. ATP hydrolysis is required for insertion. Subsequently, the homodimer reverts towards the open dimer state, lowering its affinity for the membrane-bound receptor, and returning it to the cytosol to initiate a new round of targeting. The sequence is that of ATPase GET3 from Coccidioides immitis (strain RS) (Valley fever fungus).